Consider the following 300-residue polypeptide: Ribosomal protein L11 methyltransferase (300 aa).

S-adenosyl-L-methionine-binding residues include Thr152, Gly173, Asp195, and Asn234.

Belongs to the methyltransferase superfamily. PrmA family.

The protein resides in the cytoplasm. The enzyme catalyses L-lysyl-[protein] + 3 S-adenosyl-L-methionine = N(6),N(6),N(6)-trimethyl-L-lysyl-[protein] + 3 S-adenosyl-L-homocysteine + 3 H(+). In terms of biological role, methylates ribosomal protein L11. This chain is Ribosomal protein L11 methyltransferase, found in Paraburkholderia phymatum (strain DSM 17167 / CIP 108236 / LMG 21445 / STM815) (Burkholderia phymatum).